The sequence spans 65 residues: Small ribosomal subunit protein eS27 (65 aa).

Residues C21, C24, C40, and C43 each contribute to the Zn(2+) site. The C4-type zinc finger occupies 21 to 43; the sequence is CKDCGNVQVVFARPSSVVTCNIC.

It belongs to the eukaryotic ribosomal protein eS27 family. As to quaternary structure, part of the 30S ribosomal subunit. Zn(2+) is required as a cofactor.

This is Small ribosomal subunit protein eS27 from Thermoplasma volcanium (strain ATCC 51530 / DSM 4299 / JCM 9571 / NBRC 15438 / GSS1).